The chain runs to 235 residues: DnaA regulatory inactivator Hda (235 aa).

Belongs to the DnaA family. HdA subfamily. As to quaternary structure, the active form seems to be an ADP-bound monomer. Forms the RIDA complex (regulatory inactivation of DnaA) of ATP-DnaA, ADP-Hda and the DNA-loaded beta sliding clamp (dnaN).

Mediates the interaction of DNA replication initiator protein DnaA with DNA polymerase subunit beta sliding clamp (dnaN). Stimulates hydrolysis of ATP-DnaA to ADP-DnaA, rendering DnaA inactive for reinitiation, a process called regulatory inhibition of DnaA or RIDA. The sequence is that of DnaA regulatory inactivator Hda from Yersinia pestis bv. Antiqua (strain Antiqua).